The sequence spans 1671 residues: MSSVKVAVRVRPFNSREIGRESKCIIEMTGATTAITNPKVPPNTSEAVKRFNFDYSYWSHDPRDSDFSTQTMVYKDIGEEMLQHSFDGYNVCIFAYGQTGAGKSYTMMGRQEEQQEGIIPMICQDLFTRIHDTETDELKYSVEVSYMEIYCERVRDLLNPKNKGNLRVREHPLLGPYVEDLSKLAVTDYQDIHDLIDEGNKARTVAATNMNETSSRSHAVFTIFFTQRRHDTMTDLTTEKVSKISLVDLAGSERADSTGAKGTRLKEGANINKSLTTLGKVISALAEVASKKKHNKKADFIPYRDSALTWLLRENLGGNSKTAMIAAISPADINYDETLSTLRYADRAKQIVCKAVVNEDANAKLIRELKEEIQKLRDLLKAEGIEVQEEDELNKSTTGIKSPSKSRNRNGSTTEMAVDQLQASEKLIAELNETWEEKLKRTEEIRLQREAVFAEMGVAVKEDGITVGVFSPKKTPHLVNLNEDPNLSECLLYYIKDGLTRLGTHEANVPQDIQLSGSHILKEHCTFENRNSTVTLLPHKDAIIFVNGRQLVEPEVLKTGSRVILGKNHVFRFTNPEQARELREKITENEAENEVEKADAPQVDWNFAQCELLEKQGIDLKAEMKKRLDNLEEQYKREKMQADQQFEEQRKTYEARIDALQKQVEEQSMTMSMYSSYSPEDFHQEEDVYNNPMYESCWTAREAGLAAWAFRKWRYHQFTSLRDDLWGNAIFLKEANAISVELKKKVQFQFTLLTDTLYSPLPPELASSVAPLQQEDEFGAPPVSKTLVAVEVTDTKNGATHYWSLEKLRQRLELMREMYHNEAEMSPTSPDYNVESLTGGDPFYDRFPWFRMVGRSFIYLSNLLYPVPLVHKVAIVNERGDVRGYLRIAVQPVLDEESIDFNNGVKQSARLVFNEDDAKPKYRALNEKDDVQRYIDNGGHDSKLEELEDVDSGRGIDSNSASDCPENAEEPGEHLQVGKEFTFRVTVLQATGIGAEYADIFCQFNFLHRHEEAFSTEPVKNSASGAPLGFYHVQNITVPVTKSFIEYLKTQPIMFKIFGHYQTHPLHKDAKQDFVSRPPPRRMLPPSIPISQPVRSPKFGPLPCPPSSTVLAKHDVLVWFEICELAPNGEYVPSVVEHSDDLPCRGLFLLHQGIQRRIRITIVHEPTPEVKWKDINELVVGRIRNTPESSDEQDEDACVLSLGLFPGEVLDVPGDDRSFYRFEAAWDSSLHNSALLNRVSQGGETIYITLSAYLELENCARPAIVTKDLSMVIYGRDARTGPRSLKHLFSGQYRNPEANRLSGVYELSLRRASEAGSPGVQRRQRRVLDTSSTYVRGEENLHGWRPRGDSLIFDHQWELEKLTRLEEVGRMRHLLLLRERLGMDTNPNPTTKTEKDVCNLAARAATSPVHMVIPQSPQTPVKDPQQIMPEREYNQREQDLMLKCLKLVQAGRYAKNEANDTQTQSDVSPSDEGCADMTVSCISSNSMEDNKFVIRRRLCSPDRADAPNGWEAPAPATQPALPLRLYVPELEEIRVSPVVARKGLLNVLEHGGSGWKKRWVTVRRPYVFIYRSEKDPVERAVLNLATAQVECSEDQAAMVKIPNTFSVVTKHRGYLLQTLGDKEVHDWLYAINPLLAGQIKSRLARRTLEPASQTASQIQASSAANANSANK.

The Kinesin motor domain occupies 3–351; that stretch reads SVKVAVRVRP…LRYADRAKQI (349 aa). 97 to 104 provides a ligand contact to ATP; that stretch reads GQTGAGKS. A coiled-coil region spans residues 358–437; sequence NEDANAKLIR…IAELNETWEE (80 aa). Residues 391-413 are disordered; sequence DELNKSTTGIKSPSKSRNRNGST. Over residues 395-413 the composition is skewed to polar residues; sequence KSTTGIKSPSKSRNRNGST. In terms of domain architecture, FHA spans 500-566; sequence TRLGTHEANV…LKTGSRVILG (67 aa). Residues 577-674 are a coiled coil; it reads EQARELREKI…EEQSMTMSMY (98 aa). A disordered region spans residues 949–973; the sequence is DVDSGRGIDSNSASDCPENAEEPGE. In terms of domain architecture, PH spans 1538-1636; sequence VVARKGLLNV…WLYAINPLLA (99 aa).

It belongs to the TRAFAC class myosin-kinesin ATPase superfamily. Kinesin family. Unc-104 subfamily. Monomer.

It is found in the cytoplasm. It localises to the cytoskeleton. Its function is as follows. Required for presynaptic maturation, has a role in axonal transport of dense-core vesicles carrying synaptic vesicle precursors, components required for the morphological transformation of axonal growth cones to mature boutons. The protein is Kinesin-like protein unc-104 of Drosophila pseudoobscura pseudoobscura (Fruit fly).